We begin with the raw amino-acid sequence, 311 residues long: tRNA-cytidine(32) 2-sulfurtransferase (311 aa).

Residues 47-52 (SGGKDS) carry the PP-loop motif motif. Cys122, Cys125, and Cys213 together coordinate [4Fe-4S] cluster.

The protein belongs to the TtcA family. Homodimer. The cofactor is Mg(2+). Requires [4Fe-4S] cluster as cofactor.

The protein localises to the cytoplasm. The catalysed reaction is cytidine(32) in tRNA + S-sulfanyl-L-cysteinyl-[cysteine desulfurase] + AH2 + ATP = 2-thiocytidine(32) in tRNA + L-cysteinyl-[cysteine desulfurase] + A + AMP + diphosphate + H(+). The protein operates within tRNA modification. Catalyzes the ATP-dependent 2-thiolation of cytidine in position 32 of tRNA, to form 2-thiocytidine (s(2)C32). The sulfur atoms are provided by the cysteine/cysteine desulfurase (IscS) system. This is tRNA-cytidine(32) 2-sulfurtransferase from Escherichia coli (strain SMS-3-5 / SECEC).